Consider the following 311-residue polypeptide: Methionyl-tRNA formyltransferase (311 aa).

108-111 contacts (6S)-5,6,7,8-tetrahydrofolate; it reads SILP.

Belongs to the Fmt family.

The enzyme catalyses L-methionyl-tRNA(fMet) + (6R)-10-formyltetrahydrofolate = N-formyl-L-methionyl-tRNA(fMet) + (6S)-5,6,7,8-tetrahydrofolate + H(+). In terms of biological role, attaches a formyl group to the free amino group of methionyl-tRNA(fMet). The formyl group appears to play a dual role in the initiator identity of N-formylmethionyl-tRNA by promoting its recognition by IF2 and preventing the misappropriation of this tRNA by the elongation apparatus. This is Methionyl-tRNA formyltransferase from Sorangium cellulosum (strain So ce56) (Polyangium cellulosum (strain So ce56)).